Consider the following 247-residue polypeptide: uncharacterized protein (247 aa).

This is an uncharacterized protein from Schizosaccharomyces pombe (strain 972 / ATCC 24843) (Fission yeast).